Consider the following 169-residue polypeptide: Endoribonuclease YbeY (169 aa).

Residues His-128, His-132, and His-138 each contribute to the Zn(2+) site.

This sequence belongs to the endoribonuclease YbeY family. Zn(2+) serves as cofactor.

It localises to the cytoplasm. Functionally, single strand-specific metallo-endoribonuclease involved in late-stage 70S ribosome quality control and in maturation of the 3' terminus of the 16S rRNA. The chain is Endoribonuclease YbeY from Cyanothece sp. (strain PCC 7425 / ATCC 29141).